A 247-amino-acid chain; its full sequence is MEWRDEGVILGTRRHGETSAIVEVMTCGHGRHMGMVRGGRSRRMQPLLQPGNHVDVSWWARLDEHMGTFTIEPLSFAAARLIETPVALYGIQLAAAHLRLLPERDPHRGLYETLRLIIEHFDDPLAAGELLLRFEVMMLEELGFGLDLKECAATGRKDDLIYVSPKSGRAVCREAGAPWAEKLLSLPSFVNDTALRASCYDDLDRAFTMTGYFLMRHVWEPRAQTPPDSRSGFLNAVGRAINLSQAS.

This sequence belongs to the RecO family.

Functionally, involved in DNA repair and RecF pathway recombination. The polypeptide is DNA repair protein RecO (Brucella abortus (strain 2308)).